The following is an 827-amino-acid chain: Thymine dioxygenase JBP1 (827 aa).

The segment at 62–264 (QIIGVVLREA…RLTCVFYYRA (203 aa)) is thymine dioxygenase. 3 residues coordinate Fe cation: His-189, Asp-191, and His-239. Arg-255 lines the 2-oxoglutarate pocket. 2 disordered regions span residues 364–383 (PLRG…PRPL) and 539–568 (PEEK…HEKR). The segment at 392-561 (TNLMVSTAVE…IEEARRHGMP (170 aa)) is DNA-binding JBP1 domain. Basic and acidic residues predominate over residues 539–557 (PEEKKRRMERKQRIEEARR).

It belongs to the TET family. JBP1 subfamily. Monomer. Binds to DNA as a monomer. Requires Fe(2+) as cofactor.

It localises to the nucleus. The enzyme catalyses thymine + 2-oxoglutarate + O2 = 5-hydroxymethyluracil + succinate + CO2. Its function is as follows. Dioxygenase that catalyzes the first step of DNA base J (beta-d-glucosyl-HOMedU) biosynthesis by converting thymine to 5-hydroxymethyluracil (HOMedU). DNA base J is a hypermodified thymidine residue found in the genome of kinetoplastid parasites, which is localized primarily to repetitive DNA, namely the telomeres, and is implicated in the regulation of antigenic variation. Also specifically binds to base J-containing DNA (J-DNA). Involved in propagation and maintenance of DNA base J synthesis initiated by JBP2 by specifically binding already synthesized DNA base J and propagating J synthesis. Thymine dioxygenase activity and J-DNA-binding are independent functions. This is Thymine dioxygenase JBP1 (JBP1) from Leishmania tarentolae (Sauroleishmania tarentolae).